A 751-amino-acid polypeptide reads, in one-letter code: MAAATERTDELVREYLLFRGFTAALKQLDAEIKADREKGFRVDKIVEQLQQFVQSYDLAALRDYWGYLDRRLFSRLEDMYRPTVNKLKTSLYRYYLVHTVQTGRNDKAQEFFLKQASELQNQAEWKDWFVLPFLPAPDSNPTFATYFSRQWADTFIVSLHNFLSVLFQCMPVPVILNLEAECHRSSLIQEENESLRHKLFALQAESSRMKKEELEVEEAVVHHKLPAYVANMDRLGDSELDMTCSQRSTAHSLQSRGGFLSSLLSQSKKGPARPAQPSGASPTQTGSVLLGKKEPANHQSAKGKEGTASSKDGKSHFSGLVAGESSSLQQRQKRLQEHGKERRELLSKGTSQVQSAEKKADISTSEPEPCSEPQADQAETSTKMPASSTESVGVRQEQPFIVLSQEEYGEHHSSIMYCRVDCSGRRVASLDVDGVIKVWSFNPIMQTKASSISKSPLLSLEWATKRDRLLLLGSGVGTVRLYDTEAKKNLCEISIDEDMPRILSLACSPSGASFVCSAAAQSPISHMDFSVVTSGGKSMNQVPGKLLLWDTKTMKQQLQFSLEPEPIAINCTAFNHNGNLLVTGAADGIVRLFDMQQHECAMSWKAHDGEVYSVEFSYDENTVYSIGEDGKFIQWNIHKSGLKISEYALPSEATGPFVLSGYSGYKQVQFPRGRLFAFDSEGNYMLTCSSTGGVIFKLNGEDKVLESCLSLGGHRAPVVTVDWSTAMDCGTCLTASMDGKIKLTTLLAQKS.

A coiled-coil region spans residues Ile188–Glu212. Residues Leu264 to Arg395 form a disordered region. Residues Ser278–Ser287 are compositionally biased toward polar residues. Basic and acidic residues predominate over residues Arg334–Leu346. The span at Gln377–Ser391 shows a compositional bias: polar residues. WD repeat units lie at residues Glu410–Ala449, Ile452–Glu492, Glu497–Gln559, Pro564–Ser603, Ala606–Ser645, Val668–Glu706, and Gly713–Ser751.

Belongs to the WD repeat WDR91 family.

The protein localises to the early endosome membrane. It is found in the late endosome membrane. In terms of biological role, functions as a negative regulator of the PI3 kinase/PI3K activity associated with endosomal membranes. By modifying the phosphatidylinositol 3-phosphate/PtdInsP3 content of endosomal membranes may regulate endosome fusion, recycling, sorting and early to late endosome transport. This is WD repeat-containing protein 91 from Gallus gallus (Chicken).